We begin with the raw amino-acid sequence, 282 residues long: sn-glycerol-3-phosphate transport system permease protein UgpE (282 aa).

Helical transmembrane passes span Leu-14–Ser-34, Ile-86–Phe-106, Met-112–Pro-132, Val-136–Ser-156, Ile-201–Leu-221, and Trp-248–Leu-268. The ABC transmembrane type-1 domain maps to Leu-78–Met-269.

Belongs to the binding-protein-dependent transport system permease family. As to quaternary structure, the complex is composed of two ATP-binding proteins (UgpC), two transmembrane proteins (UgpA and UgpE) and a solute-binding protein (UgpB).

It is found in the cell inner membrane. Functionally, part of the ABC transporter complex UgpBAEC involved in sn-glycerol-3-phosphate (G3P) import. Probably responsible for the translocation of the substrate across the membrane. The protein is sn-glycerol-3-phosphate transport system permease protein UgpE (ugpE) of Rhizobium meliloti (strain 1021) (Ensifer meliloti).